Consider the following 95-residue polypeptide: Acylphosphatase (95 aa).

Residues 8–95 form the Acylphosphatase-like domain; that stretch reads RAKILVRGKV…GNFRTFEIKK (88 aa). Active-site residues include Arg23 and Asn41.

This sequence belongs to the acylphosphatase family.

It carries out the reaction an acyl phosphate + H2O = a carboxylate + phosphate + H(+). This is Acylphosphatase (acyP) from Leptospira interrogans serogroup Icterohaemorrhagiae serovar copenhageni (strain Fiocruz L1-130).